Here is a 33-residue protein sequence, read N- to C-terminus: Alpha-amanitin proprotein (33 aa).

A propeptide spanning residues 1-10 (MSDINATRLP) is cleaved from the precursor. Position 11 is a (3R,4R)-4,5-dihydroxyisoleucine; in form alpha-amanitin (isoleucine 11). Isoleucine 11 carries the post-translational modification (3R,4S)-4-hydroxyisoleucine; in form gamma-amanitin. The cyclopeptide (Ile-Pro) cross-link spans 11–18 (IWGIGCNP). The segment at residues 12 to 16 (WGIGC) is a cross-link (2'-cysteinyl-6'-hydroxytryptophan sulfoxide (Trp-Cys)). Position 18 is a 4-hydroxyproline (proline 18). The propeptide occupies 19–33 (SVGDEVTALLASGEA).

Belongs to the MSDIN fungal toxin family. Post-translationally, processed by the macrocyclase-peptidase enzyme POPB to yield a toxic cyclic decapeptide. POPB first removes 10 residues from the N-terminus. Conformational trapping of the remaining peptide forces the enzyme to release this intermediate rather than proceed to macrocyclization. The enzyme rebinds the remaining peptide in a different conformation and catalyzes macrocyclization of the N-terminal 8 residues.

In terms of biological role, major toxin belonging to the bicyclic octapeptides amatoxins that acts by binding non-competitively to RNA polymerase II and greatly slowing the elongation of transcripts from target promoters. This Amanita rimosa protein is Alpha-amanitin proprotein.